A 295-amino-acid polypeptide reads, in one-letter code: 4-hydroxy-tetrahydrodipicolinate synthase (295 aa).

Thr-46 is a pyruvate binding site. Tyr-135 functions as the Proton donor/acceptor in the catalytic mechanism. Lys-164 serves as the catalytic Schiff-base intermediate with substrate. Ile-205 contributes to the pyruvate binding site.

The protein belongs to the DapA family. Homotetramer; dimer of dimers.

It localises to the cytoplasm. It catalyses the reaction L-aspartate 4-semialdehyde + pyruvate = (2S,4S)-4-hydroxy-2,3,4,5-tetrahydrodipicolinate + H2O + H(+). Its pathway is amino-acid biosynthesis; L-lysine biosynthesis via DAP pathway; (S)-tetrahydrodipicolinate from L-aspartate: step 3/4. Functionally, catalyzes the condensation of (S)-aspartate-beta-semialdehyde [(S)-ASA] and pyruvate to 4-hydroxy-tetrahydrodipicolinate (HTPA). The protein is 4-hydroxy-tetrahydrodipicolinate synthase of Aliarcobacter butzleri (strain RM4018) (Arcobacter butzleri).